Consider the following 751-residue polypeptide: Trehalose phosphorylase (751 aa).

Residues 1–26 (MSTPHHQFESKSSTAIRRRLSSSVSS) constitute a propeptide that is removed on maturation. Positions 1-28 (MSTPHHQFESKSSTAIRRRLSSSVSSKQ) are disordered.

The protein belongs to the glycosyltransferase group 1 family. Glycosyltransferase 4 subfamily. Homodimer. As to expression, expressed in mycelia, stipes and pilei.

The catalysed reaction is alpha,alpha-trehalose + phosphate = alpha-D-glucose + alpha-D-glucose 1-phosphate. Reversibly catalyzes the synthesis and degradation of trehalose from glucose and alpha-D-glucose 1-phosphate. The equilibrium lies in the direction of trehalose synthesis. This Pleurotus sajor-caju (Oyster mushroom) protein is Trehalose phosphorylase.